The chain runs to 273 residues: Putative phosphoenolpyruvate synthase regulatory protein (273 aa).

Residue 153-160 (AVSRAGKT) participates in ADP binding.

The protein belongs to the pyruvate, phosphate/water dikinase regulatory protein family. PSRP subfamily.

It catalyses the reaction [pyruvate, water dikinase] + ADP = [pyruvate, water dikinase]-phosphate + AMP + H(+). The enzyme catalyses [pyruvate, water dikinase]-phosphate + phosphate + H(+) = [pyruvate, water dikinase] + diphosphate. Its function is as follows. Bifunctional serine/threonine kinase and phosphorylase involved in the regulation of the phosphoenolpyruvate synthase (PEPS) by catalyzing its phosphorylation/dephosphorylation. In Xylella fastidiosa (strain 9a5c), this protein is Putative phosphoenolpyruvate synthase regulatory protein.